The primary structure comprises 266 residues: uncharacterized protein (266 aa).

The TIR domain maps to 112–261; that stretch reads LEKKIFISHS…KKWERIKAKF (150 aa). Glu192 is an active-site residue.

It carries out the reaction NAD(+) + H2O = ADP-D-ribose + nicotinamide + H(+). This is an uncharacterized protein from Bacillus subtilis (strain 168).